The chain runs to 1247 residues: SAM and SH3 domain-containing protein 1 (1247 aa).

The disordered stretch occupies residues 1 to 39 (MEDAGAAGPGPEPEPEPEPEPEPAPEPEPEPKPGAGTSE). Positions 13–28 (PEPEPEPEPEPAPEPE) are enriched in acidic residues. Serine 90 is modified (phosphoserine). 3 disordered regions span residues 126–145 (VERKNPLHKSNSEDSSVGKG), 221–257 (AALDPADWPDGSYPTFDGSSNCNSREQSDDETEESVK), and 316–344 (FFDGSPEKPPEDDSDSLTTSPSSSSLDTW). Phosphoserine is present on serine 248. Low complexity predominate over residues 331 to 343 (SLTTSPSSSSLDT). The residue at position 407 (serine 407) is a Phosphoserine. The disordered stretch occupies residues 449-573 (SLGKKVKSVK…DFTPSPYDTD (125 aa)). 2 stretches are compositionally biased toward low complexity: residues 468-484 (KYSSSVSEQDSGLDGMP) and 505-523 (GGSVESLRSSLSGQSSMSG). Positions 524–536 (QTVSTTDSSTSNR) are enriched in polar residues. One can recognise an SH3 domain in the interval 554–615 (PFCGRARVHT…KFIYVDVLSE (62 aa)). Phosphoserine is present on serine 614. 2 disordered regions span residues 616-639 (DEEKPKRPTRRRRKGRPPQPKSVE) and 713-810 (DSQG…LNKN). Positions 622-631 (RPTRRRRKGR) are enriched in basic residues. An SAM 1 domain is found at 633 to 697 (PQPKSVEDLL…LTAVELLQEY (65 aa)). Residues 746–765 (SAKSSTEPSLKSFSRNQLGN) show a composition bias toward polar residues. Residues serine 821 and serine 839 each carry the phosphoserine modification. 3 disordered regions span residues 846-884 (EPGAEQDVPTEVTEPPPQIVPEVPQKTTASSTKAQPLEQ), 903-946 (PQKL…LART), and 971-1065 (DAEQ…SELP). Positions 852 to 860 (DVPTEVTEP) are required for interaction with TRAF6. A Phosphothreonine modification is found at threonine 858. Pro residues predominate over residues 1050-1060 (GSPPSTRPPPW). The region spanning 1177-1241 (GCISSVSDWL…LSAARLFKLP (65 aa)) is the SAM 2 domain.

In terms of assembly, interacts with GNAS. Interacts with IQGAP1. Interacts with TRAF6 (via C-terminus); the interaction is LPS-dependent. Interacts with MAP3K7, CHUK and IKBKB. As to expression, expressed ubiquitously, with highest levels in lung, placenta, spleen and thymus. Down-regulated in the majority (74%) of breast tumors in comparison with corresponding normal breast epithelial tissues. Expressed in the epidermis, epidermal keratinocytes, dermal fibroblasts and melanocytes.

It localises to the cytoplasm. Functionally, is a positive regulator of NF-kappa-B signaling downstream of TLR4 activation. It acts as a scaffold molecule to assemble a molecular complex that includes TRAF6, MAP3K7, CHUK and IKBKB, thereby facilitating NF-kappa-B signaling activation. Regulates TRAF6 and MAP3K7 ubiquitination. Involved in the regulation of cell mobility. Regulates lipolysaccharide (LPS)-induced endothelial cell migration. Is involved in the regulation of skin pigmentation through the control of melanocyte migration in the epidermis. The chain is SAM and SH3 domain-containing protein 1 (SASH1) from Homo sapiens (Human).